The chain runs to 65 residues: DNA gyrase inhibitor YacG (65 aa).

Cysteine 10, cysteine 13, cysteine 29, and cysteine 33 together coordinate Zn(2+). The interval 45 to 65 (EKAIPGAPDMSDSDGWSEDQY) is disordered. A compositionally biased stretch (acidic residues) spans 55-65 (SDSDGWSEDQY).

The protein belongs to the DNA gyrase inhibitor YacG family. In terms of assembly, interacts with GyrB. It depends on Zn(2+) as a cofactor.

Its function is as follows. Inhibits all the catalytic activities of DNA gyrase by preventing its interaction with DNA. Acts by binding directly to the C-terminal domain of GyrB, which probably disrupts DNA binding by the gyrase. The polypeptide is DNA gyrase inhibitor YacG (Vibrio cholerae serotype O1 (strain ATCC 39315 / El Tor Inaba N16961)).